A 947-amino-acid polypeptide reads, in one-letter code: Translation initiation factor IF-2 (947 aa).

The segment at 69 to 353 is disordered; sequence RRRKEVPQEE…TPKPQKKTEV (285 aa). Positions 81 to 108 are enriched in low complexity; sequence APPAAAEEPSSVDTAVAEEAPAEEVQPV. A compositionally biased stretch (acidic residues) spans 139–155; it reads PVVEEVIAEPAVEEVVE. Composition is skewed to basic and acidic residues over residues 215–226 and 246–262; these read VTKEKPKVEKAT and KRQERAKNGKGRPERPK. Positions 264 to 284 are enriched in low complexity; it reads AKPSGGPAPRAKEAAPQAAVP. A compositionally biased stretch (basic and acidic residues) spans 327–337; sequence QVYEPERDERR. The span at 338-348 shows a compositional bias: basic residues; it reads MRRGKKTPKPQ. The region spanning 447–616 is the tr-type G domain; that stretch reads PRPPVVTIMG…LLQAEVLELK (170 aa). The G1 stretch occupies residues 456-463; it reads GHVDHGKT. 456-463 is a binding site for GTP; it reads GHVDHGKT. A G2 region spans residues 481 to 485; sequence GITQH. Residues 502–505 form a G3 region; sequence DTPG. Residues 502-506 and 556-559 contribute to the GTP site; these read DTPGH and NKMD. Residues 556 to 559 form a G4 region; the sequence is NKMD. The tract at residues 592 to 594 is G5; it reads SAK.

It belongs to the TRAFAC class translation factor GTPase superfamily. Classic translation factor GTPase family. IF-2 subfamily.

It is found in the cytoplasm. In terms of biological role, one of the essential components for the initiation of protein synthesis. Protects formylmethionyl-tRNA from spontaneous hydrolysis and promotes its binding to the 30S ribosomal subunits. Also involved in the hydrolysis of GTP during the formation of the 70S ribosomal complex. The sequence is that of Translation initiation factor IF-2 from Syntrophotalea carbinolica (strain DSM 2380 / NBRC 103641 / GraBd1) (Pelobacter carbinolicus).